The chain runs to 212 residues: Peptide methionine sulfoxide reductase MsrA (212 aa).

C52 is a catalytic residue.

Belongs to the MsrA Met sulfoxide reductase family.

The catalysed reaction is L-methionyl-[protein] + [thioredoxin]-disulfide + H2O = L-methionyl-(S)-S-oxide-[protein] + [thioredoxin]-dithiol. It catalyses the reaction [thioredoxin]-disulfide + L-methionine + H2O = L-methionine (S)-S-oxide + [thioredoxin]-dithiol. Its function is as follows. Has an important function as a repair enzyme for proteins that have been inactivated by oxidation. Catalyzes the reversible oxidation-reduction of methionine sulfoxide in proteins to methionine. In Escherichia fergusonii (strain ATCC 35469 / DSM 13698 / CCUG 18766 / IAM 14443 / JCM 21226 / LMG 7866 / NBRC 102419 / NCTC 12128 / CDC 0568-73), this protein is Peptide methionine sulfoxide reductase MsrA.